A 390-amino-acid chain; its full sequence is Lipoyl synthase, mitochondrial (390 aa).

A mitochondrion-targeting transit peptide spans 1-18 (MALYRAPKLQRSLLNRCL). The [4Fe-4S] cluster site is built by Cys-99, Cys-104, Cys-110, Cys-137, Cys-141, Cys-144, and Ser-351. The region spanning 120 to 340 (AEGRSAATAT…KQVAEDLGFL (221 aa)) is the Radical SAM core domain.

This sequence belongs to the radical SAM superfamily. Lipoyl synthase family. It depends on [4Fe-4S] cluster as a cofactor.

The protein resides in the mitochondrion. It carries out the reaction [[Fe-S] cluster scaffold protein carrying a second [4Fe-4S](2+) cluster] + N(6)-octanoyl-L-lysyl-[protein] + 2 oxidized [2Fe-2S]-[ferredoxin] + 2 S-adenosyl-L-methionine + 4 H(+) = [[Fe-S] cluster scaffold protein] + N(6)-[(R)-dihydrolipoyl]-L-lysyl-[protein] + 4 Fe(3+) + 2 hydrogen sulfide + 2 5'-deoxyadenosine + 2 L-methionine + 2 reduced [2Fe-2S]-[ferredoxin]. It participates in protein modification; protein lipoylation via endogenous pathway; protein N(6)-(lipoyl)lysine from octanoyl-[acyl-carrier-protein]: step 2/2. In terms of biological role, catalyzes the radical-mediated insertion of two sulfur atoms into the C-6 and C-8 positions of the octanoyl moiety bound to the lipoyl domains of lipoate-dependent enzymes, thereby converting the octanoylated domains into lipoylated derivatives. The sequence is that of Lipoyl synthase, mitochondrial from Coprinopsis cinerea (strain Okayama-7 / 130 / ATCC MYA-4618 / FGSC 9003) (Inky cap fungus).